The following is a 483-amino-acid chain: Leukocyte immunoglobulin-like receptor subfamily A member 2 (483 aa).

Positions 1-23 are cleaved as a signal peptide; sequence MTPILTVLICLGLSLGPRTHVQA. At 24–449 the chain is on the extracellular side; that stretch reads GHLPKPTLWA…QHPQDYTVEN (426 aa). Ig-like C2-type domains lie at 27–113, 117–222, 224–313, and 324–413; these read PKPT…DPLE, TGAY…GVSK, PSLS…DPLD, and PSLS…SDPL. A disulfide bond links C49 and C97. Residues N64, N103, and N138 are each glycosylated (N-linked (GlcNAc...) asparagine). 2 cysteine pairs are disulfide-bonded: C143–C195 and C244–C295. 3 N-linked (GlcNAc...) asparagine glycosylation sites follow: N279, N300, and N339. An intrachain disulfide couples C344 to C395. Position 404 is a 3'-nitrotyrosine (Y404). N429 is a glycosylation site (N-linked (GlcNAc...) asparagine). The chain crosses the membrane as a helical span at residues 450–470; sequence LIRMGVAGLVLVVLGILLFEA. Residues 471–483 are Cytoplasmic-facing; it reads QHSQRSLQDAAGR.

As to quaternary structure, homodimer. In terms of tissue distribution, detected on the surface of all peripheral blood monocytes, neutrophils, basophils and eosinophils (at protein level). Expression levels are very low or not detectable on monocytes, T-cells, B-cells, dendritic cells and natural killer (NK) cells.

Its subcellular location is the cell membrane. The protein resides in the secreted. Functionally, part of the innate immune responses against microbial infection. Specifically recognizes a set of N-terminally truncated immunoglobulins that are produced via cleavage by proteases from a range of pathogenic bacteria and fungi, including L.pneumophila, M.hyorhinis, S.pneumoniae, S.aureus and C.albicans. Recognizes epitopes that are in part in the variable region of the immunoglobulin light chains, but requires also the constant region for signaling. Binds to a subset of cleaved IgM, IgG3 and IgG4 molecules, but does not bind cleaved IgA1. Binding of N-terminally truncated immunoglobulins mediates activation of neutrophils. In monocytes, activation leads to the release of CSF2, CF3, IL6, CXCL8 and CCL3 and down-regulates responses to bacterial lipopolysaccharide (LPS), possibly via down-regulation of TLR4 expression and reduced signaling via TLR4. In eosinophils, activation by ligand binding leads to the release of RNASE2, IL4 and leukotriene C4. Does not bind class I MHC antigens. This chain is Leukocyte immunoglobulin-like receptor subfamily A member 2 (LILRA2), found in Homo sapiens (Human).